The sequence spans 633 residues: uncharacterized protein (633 aa).

This is an uncharacterized protein from Archaeoglobus fulgidus (strain ATCC 49558 / DSM 4304 / JCM 9628 / NBRC 100126 / VC-16).